The chain runs to 89 residues: Small ribosomal subunit protein uS15 (89 aa).

Belongs to the universal ribosomal protein uS15 family. In terms of assembly, part of the 30S ribosomal subunit. Forms a bridge to the 50S subunit in the 70S ribosome, contacting the 23S rRNA.

Its function is as follows. One of the primary rRNA binding proteins, it binds directly to 16S rRNA where it helps nucleate assembly of the platform of the 30S subunit by binding and bridging several RNA helices of the 16S rRNA. Functionally, forms an intersubunit bridge (bridge B4) with the 23S rRNA of the 50S subunit in the ribosome. In Caulobacter vibrioides (strain NA1000 / CB15N) (Caulobacter crescentus), this protein is Small ribosomal subunit protein uS15.